Reading from the N-terminus, the 338-residue chain is Ferrochelatase (338 aa).

2 residues coordinate Fe cation: His-207 and Glu-293.

It belongs to the ferrochelatase family.

Its subcellular location is the cytoplasm. The catalysed reaction is heme b + 2 H(+) = protoporphyrin IX + Fe(2+). Its pathway is porphyrin-containing compound metabolism; protoheme biosynthesis; protoheme from protoporphyrin-IX: step 1/1. Functionally, catalyzes the ferrous insertion into protoporphyrin IX. In Shewanella denitrificans (strain OS217 / ATCC BAA-1090 / DSM 15013), this protein is Ferrochelatase.